A 65-amino-acid chain; its full sequence is Neurotoxin Bot2 (65 aa).

In terms of domain architecture, LCN-type CS-alpha/beta spans 2 to 64 (RDAYIAQPEN…VPIRIEGKCH (63 aa)). 4 disulfide bridges follow: Cys-12/Cys-63, Cys-16/Cys-36, Cys-22/Cys-46, and Cys-26/Cys-48. The residue at position 65 (Phe-65) is a Phenylalanine amide.

The protein belongs to the long (4 C-C) scorpion toxin superfamily. Sodium channel inhibitor family. Alpha subfamily. In terms of tissue distribution, expressed by the venom gland.

The protein localises to the secreted. Binds to sodium channels (Nav) and inhibits the inactivation of the activated channels, thereby blocking neuronal transmission. This Buthus occitanus tunetanus (Common European scorpion) protein is Neurotoxin Bot2.